The primary structure comprises 251 residues: MTAPRDPFFPADLSIRASAEPIEIQRLGLIDYQEAWDYQAELATRRANDEIPDQLLILEHPSVYTAGKRTQPEDLPTNGLPVINADRGGRITWHGPGQLVIYPIIKLADPIDVVDYVRRLEEALIQVVGDMGVAGAGRIDGRSGVWVPAHDGWVDSKVAAIGIRITRGVAMHGVAINCNNTLDFYEHIIPCGIADAGLSTLSRELKRDVSVEELVEPSIRALDDALAGRLVVSDHSFGSAPDPTKNLPKRG.

Positions 49 to 230 (DEIPDQLLIL…ALDDALAGRL (182 aa)) constitute a BPL/LPL catalytic domain. Substrate contacts are provided by residues 87-94 (RGGRITWH), 160-162 (AIG), and 173-175 (GVA). Cys-191 functions as the Acyl-thioester intermediate in the catalytic mechanism.

The protein belongs to the LipB family.

It is found in the cytoplasm. The catalysed reaction is octanoyl-[ACP] + L-lysyl-[protein] = N(6)-octanoyl-L-lysyl-[protein] + holo-[ACP] + H(+). The protein operates within protein modification; protein lipoylation via endogenous pathway; protein N(6)-(lipoyl)lysine from octanoyl-[acyl-carrier-protein]: step 1/2. Functionally, catalyzes the transfer of endogenously produced octanoic acid from octanoyl-acyl-carrier-protein onto the lipoyl domains of lipoate-dependent enzymes. Lipoyl-ACP can also act as a substrate although octanoyl-ACP is likely to be the physiological substrate. The polypeptide is Octanoyltransferase (Corynebacterium glutamicum (strain R)).